Consider the following 370-residue polypeptide: MPHQQILMLFGLLPVATNISTWWNFGSMLLACSTLQVMTGFFLAVHYTANINMAFSSIVHIIRDVPYGWLMQNLHAIGASMFFICIYIHIARGLYYGSYLNKETWLSGTTLLIMLMATAFFGYVLPWGQMSFWAATVITNLLTAIPYLGSTMTTWLWGGFAINDPTLTRFFALHFILPFGIISLSSLHIMLLHEDGSSNPLGTNSDIDKIPFHPYQTYKDLLMLTMMTTLLLMIVSFFPDIFNDPDNFSKANPLVTPQHIKPEWYFLFAYGILRSIPNKLGGALALTMSIMILLTVPFTHTSKLRSMMFRPFMQLMFWTFAATFLVITWTATKPVEPPFTTISQVAALMYFMFFISNPIMGWMENKIMKT.

Helical transmembrane passes span 25-45 (FGSM…FLAV), 69-90 (WLMQ…YIHI), 105-125 (WLSG…GYVL), and 170-190 (FFAL…LHIM). The heme b site is built by histidine 75 and histidine 89. 2 residues coordinate heme b: histidine 174 and histidine 188. Residue histidine 193 coordinates a ubiquinone. 4 helical membrane passes run 218–238 (YKDL…VSFF), 280–300 (LGGA…PFTH), 312–332 (FMQL…WTAT), and 339–358 (FTTI…ISNP).

The protein belongs to the cytochrome b family. As to quaternary structure, the cytochrome bc1 complex contains 3 respiratory subunits (MT-CYB, CYC1 and UQCRFS1), 2 core proteins (UQCRC1 and UQCRC2) and probably 6 low-molecular weight proteins. The cofactor is heme b.

The protein localises to the mitochondrion inner membrane. Component of the ubiquinol-cytochrome c reductase complex (complex III or cytochrome b-c1 complex) that is part of the mitochondrial respiratory chain. The b-c1 complex mediates electron transfer from ubiquinol to cytochrome c. Contributes to the generation of a proton gradient across the mitochondrial membrane that is then used for ATP synthesis. In Chilabothrus fordii (Ford's boa), this protein is Cytochrome b (MT-CYB).